The chain runs to 87 residues: U14-lycotoxin-Ls1a (87 aa).

Positions 1–20 (MNSKVFAVLLLLALSTCVLS) are cleaved as a signal peptide. One can recognise a WAP domain in the interval 21-66 (EKYCPTPRNTSCKKMNIRNNCCRDSDCTSNAFCCAEPCGNFCHKAS). Intrachain disulfides connect Cys24–Cys54, Cys32–Cys58, Cys41–Cys53, Cys42–Cys80, and Cys47–Cys62.

Belongs to the venom protein 11 family. 01 (wap-1) subfamily. In terms of processing, contains 5 disulfide bonds. In terms of tissue distribution, expressed by the venom gland.

Its subcellular location is the secreted. In terms of biological role, has antibacterial activity. This chain is U14-lycotoxin-Ls1a, found in Lycosa singoriensis (Wolf spider).